We begin with the raw amino-acid sequence, 130 residues long: uncharacterized protein (130 aa).

Asn102 carries N-linked (GlcNAc...) asparagine glycosylation. A helical membrane pass occupies residues 110 to 130 (DPLAFYLMFLIIITILLIMIL).

Its subcellular location is the membrane. This is an uncharacterized protein from Dictyostelium discoideum (Social amoeba).